We begin with the raw amino-acid sequence, 338 residues long: Ketol-acid reductoisomerase (NADP(+)) (338 aa).

Residues 3–183 (IELLYDADAD…GGARAGVIPT (181 aa)) enclose the KARI N-terminal Rossmann domain. NADP(+) is bound by residues 26-29 (YGSQ), R49, S52, S54, and 84-87 (DTSQ). Residue H109 is part of the active site. NADP(+) is bound at residue G135. One can recognise a KARI C-terminal knotted domain in the interval 184-329 (TFEAETVTDL…AKLRDLMSWV (146 aa)). Positions 192, 196, 228, and 232 each coordinate Mg(2+). S253 contributes to the substrate binding site.

It belongs to the ketol-acid reductoisomerase family. Mg(2+) serves as cofactor.

It catalyses the reaction (2R)-2,3-dihydroxy-3-methylbutanoate + NADP(+) = (2S)-2-acetolactate + NADPH + H(+). The catalysed reaction is (2R,3R)-2,3-dihydroxy-3-methylpentanoate + NADP(+) = (S)-2-ethyl-2-hydroxy-3-oxobutanoate + NADPH + H(+). It functions in the pathway amino-acid biosynthesis; L-isoleucine biosynthesis; L-isoleucine from 2-oxobutanoate: step 2/4. It participates in amino-acid biosynthesis; L-valine biosynthesis; L-valine from pyruvate: step 2/4. In terms of biological role, involved in the biosynthesis of branched-chain amino acids (BCAA). Catalyzes an alkyl-migration followed by a ketol-acid reduction of (S)-2-acetolactate (S2AL) to yield (R)-2,3-dihydroxy-isovalerate. In the isomerase reaction, S2AL is rearranged via a Mg-dependent methyl migration to produce 3-hydroxy-3-methyl-2-ketobutyrate (HMKB). In the reductase reaction, this 2-ketoacid undergoes a metal-dependent reduction by NADPH to yield (R)-2,3-dihydroxy-isovalerate. The polypeptide is Ketol-acid reductoisomerase (NADP(+)) (Corynebacterium glutamicum (strain ATCC 13032 / DSM 20300 / JCM 1318 / BCRC 11384 / CCUG 27702 / LMG 3730 / NBRC 12168 / NCIMB 10025 / NRRL B-2784 / 534)).